We begin with the raw amino-acid sequence, 80 residues long: Protein CEBPZOS (80 aa).

The chain crosses the membrane as a helical span at residues 15–32; it reads GVLVAELVGVFGAYFLFS.

The protein resides in the mitochondrion membrane. The protein is Protein CEBPZOS of Homo sapiens (Human).